The following is a 382-amino-acid chain: V-type proton ATPase subunit C 1 (382 aa).

The residue at position 2 (threonine 2) is an N-acetylthreonine.

The protein belongs to the V-ATPase C subunit family. V-ATPase is a heteromultimeric enzyme made up of two complexes: the ATP-hydrolytic V1 complex and the proton translocation V0 complex. The V1 complex consists of three catalytic AB heterodimers that form a heterohexamer, three peripheral stalks each consisting of EG heterodimers, one central rotor including subunits D and F, and the regulatory subunits C and H. The proton translocation complex V0 consists of the proton transport subunit a, a ring of proteolipid subunits c9c'', rotary subunit d, subunits e and f, and the accessory subunits ATP6AP1/Ac45 and ATP6AP2/PRR. In terms of tissue distribution, expressed in brain (at protein level).

It is found in the cytoplasmic vesicle. It localises to the secretory vesicle. Its subcellular location is the synaptic vesicle membrane. The protein resides in the clathrin-coated vesicle membrane. In terms of biological role, subunit of the V1 complex of vacuolar(H+)-ATPase (V-ATPase), a multisubunit enzyme composed of a peripheral complex (V1) that hydrolyzes ATP and a membrane integral complex (V0) that translocates protons. V-ATPase is responsible for acidifying and maintaining the pH of intracellular compartments and in some cell types, is targeted to the plasma membrane, where it is responsible for acidifying the extracellular environment. Subunit C is necessary for the assembly of the catalytic sector of the enzyme and is likely to have a specific function in its catalytic activity. This is V-type proton ATPase subunit C 1 (Atp6v1c1) from Rattus norvegicus (Rat).